We begin with the raw amino-acid sequence, 401 residues long: MATILLSSRLPTTGTATPSPTRPAPRFLSFPGTAIRRRGRGPLLASSAVSPPAPASAAQPYRALPASETTVLVTGATGYIGRYVVWELLRRGHRVLAVARSRSGIRGRNSPDDVVADLAPAQVVFSDVTDPAALLADLAPHGPVHAAVCCLASRGGGVQDSWRVDYRATLHTLQAARGLGAAHFVLLSAICVQKPLLEFQRAKLKFEEELAAEAARDPSFTYSVVRPTAFFKSLGGQVDIVKNGQPYVMFGDGKLCACKPISEEDLAAFIADCIYDQDKANKVLPIGGPGKALTPLEQGEMLFRLLGREPKFIKVPIQIMDAVIWVLDGLAKLFPGLEDAAEFGKIGRYYASESMLLLDPETGEYSDEKTPSYGKDTLEQFFQRVIREGMAGQELGEQTIF.

The segment covering 1–10 (MATILLSSRL) has biased composition (polar residues). The interval 1-26 (MATILLSSRLPTTGTATPSPTRPAPR) is disordered. Residues 1–54 (MATILLSSRLPTTGTATPSPTRPAPRFLSFPGTAIRRRGRGPLLASSAVSPPAP) constitute a chloroplast transit peptide.

It localises to the plastid. Its subcellular location is the chloroplast. It catalyses the reaction protochlorophyllide a + NADP(+) = 3,8-divinyl protochlorophyllide a + NADPH + H(+). The protein operates within porphyrin-containing compound metabolism; chlorophyll biosynthesis. Its function is as follows. Catalyzes the conversion of divinyl chlorophyllide to monovinyl chlorophyllide. Reduces the 8-vinyl group of the tetrapyrrole to an ethyl group using NADPH as the reductant. Can use (3,8-divinyl)-chlorophyllide a (DV-Chlidea) &gt; (3,8-divinyl)-chlorophyll a (DV-Chla) &gt; (3,8-divinyl)-protochlorophyllide a (DV-Pchlidea) &gt; (3,8-divinyl)-magnesium-protoporphyrin IX monomethyl ester (DV-MPE) &gt; (3,8-divinyl)-magnesium-protoporphyrin IX (DV-Mg-Proto) as substrates. This chain is Divinyl chlorophyllide a 8-vinyl-reductase, chloroplastic (DVR), found in Zea mays (Maize).